The chain runs to 196 residues: LNYEYSDLEPVLSAHLLSFHHGKHHQAYVNNLNATYEQIAAATKENDAHKIATLQSALRFNLGGHVNHWIYWDNLAPVKSGGGVLPDEHSPLTKAIKEKWGSYENFITLFNTRTAAIQGSGWGWLGYDTVSKSLRLFELGNQDMPEWSSIVPLLTIDVWEHAYYLDYQNLRPKYLTEVWKIVNWREVEKRYLQAIE.

Residues H20, H68, D157, and H161 each coordinate Fe cation.

This sequence belongs to the iron/manganese superoxide dismutase family. Homotetramer. The cofactor is Fe cation.

The enzyme catalyses 2 superoxide + 2 H(+) = H2O2 + O2. Its function is as follows. Destroys superoxide anion radicals which are normally produced within the cells and which are toxic to biological systems. The sequence is that of Superoxide dismutase [Fe] from Tetrahymena pyriformis.